A 398-amino-acid chain; its full sequence is 1-deoxy-D-xylulose 5-phosphate reductoisomerase (398 aa).

NADPH contacts are provided by Thr-10, Gly-11, Ser-12, Ile-13, Asn-38, and Asn-124. Lys-125 is a binding site for 1-deoxy-D-xylulose 5-phosphate. Glu-126 is a binding site for NADPH. Position 150 (Asp-150) interacts with Mn(2+). 1-deoxy-D-xylulose 5-phosphate is bound by residues Ser-151, Glu-152, Ser-176, and His-199. Position 152 (Glu-152) interacts with Mn(2+). Gly-205 contributes to the NADPH binding site. 1-deoxy-D-xylulose 5-phosphate-binding residues include Ser-212, Asn-217, Lys-218, and Glu-221. Glu-221 contributes to the Mn(2+) binding site.

It belongs to the DXR family. Requires Mg(2+) as cofactor. Mn(2+) is required as a cofactor.

It catalyses the reaction 2-C-methyl-D-erythritol 4-phosphate + NADP(+) = 1-deoxy-D-xylulose 5-phosphate + NADPH + H(+). Its pathway is isoprenoid biosynthesis; isopentenyl diphosphate biosynthesis via DXP pathway; isopentenyl diphosphate from 1-deoxy-D-xylulose 5-phosphate: step 1/6. Its function is as follows. Catalyzes the NADPH-dependent rearrangement and reduction of 1-deoxy-D-xylulose-5-phosphate (DXP) to 2-C-methyl-D-erythritol 4-phosphate (MEP). The protein is 1-deoxy-D-xylulose 5-phosphate reductoisomerase of Crocosphaera subtropica (strain ATCC 51142 / BH68) (Cyanothece sp. (strain ATCC 51142)).